The sequence spans 149 residues: Urease accessory protein UreE (149 aa).

It belongs to the UreE family.

The protein localises to the cytoplasm. Functionally, involved in urease metallocenter assembly. Binds nickel. Probably functions as a nickel donor during metallocenter assembly. The protein is Urease accessory protein UreE of Ruegeria pomeroyi (strain ATCC 700808 / DSM 15171 / DSS-3) (Silicibacter pomeroyi).